Consider the following 84-residue polypeptide: Small ribosomal subunit protein uS17 (84 aa).

Belongs to the universal ribosomal protein uS17 family. In terms of assembly, part of the 30S ribosomal subunit.

Functionally, one of the primary rRNA binding proteins, it binds specifically to the 5'-end of 16S ribosomal RNA. This chain is Small ribosomal subunit protein uS17, found in Photorhabdus laumondii subsp. laumondii (strain DSM 15139 / CIP 105565 / TT01) (Photorhabdus luminescens subsp. laumondii).